We begin with the raw amino-acid sequence, 909 residues long: Yellow mounds protein A (909 aa).

One can recognise an MIF4G domain in the interval 7 to 283 (LNVVSRILNK…KNLFELKNNK (277 aa)). Disordered regions lie at residues 178–232 (SMGG…NNNI), 415–439 (MESSSNNNNSNSQLQFSLSSSSGIK), 460–537 (INLP…SSAP), 627–689 (VPPV…SEAR), and 704–774 (SLSG…AKKH). Positions 204 to 215 (DDDDHDEEDNEN) are enriched in acidic residues. 2 stretches are compositionally biased toward low complexity: residues 216–231 (NYENTTSTTNNINNNN) and 417–436 (SSSNNNNSNSQLQFSLSSSS). The segment covering 473 to 490 (RSNSPSLSSVVKQPQSQQ) has biased composition (polar residues). A compositionally biased stretch (low complexity) spans 491–525 (NNNNNNNNNNNNTTITTTTSSNNNINNNNNNNNNN). Residues 721-738 (STPTLKSTPAIVQNGGSI) are compositionally biased toward polar residues. Over residues 739–756 (TSTSSSSSSSSSSSSSTT) the composition is skewed to low complexity. Positions 845 to 877 (TMLFDLEEMAQEQQNLEKQNDQQQNLLTQNNQI) form a coiled coil.

Plays as essential role in regulating terminal differentiation. This chain is Yellow mounds protein A (yelA), found in Dictyostelium discoideum (Social amoeba).